The primary structure comprises 376 residues: uncharacterized protein (376 aa).

The region spanning 82-372 is the Peptidase M14 domain; it reads KIYDDSAVEK…ATSGILWRAL (291 aa). Zn(2+) contacts are provided by histidine 138, glutamate 141, and histidine 283. The Proton donor/acceptor role is filled by glutamate 344.

It belongs to the peptidase M14 family. Requires Zn(2+) as cofactor.

This is an uncharacterized protein from Bacillus subtilis (strain 168).